The primary structure comprises 456 residues: UDP-N-acetylmuramate--L-alanine ligase (456 aa).

Residue 117–123 participates in ATP binding; the sequence is GTHGKTT.

This sequence belongs to the MurCDEF family.

The protein resides in the cytoplasm. The catalysed reaction is UDP-N-acetyl-alpha-D-muramate + L-alanine + ATP = UDP-N-acetyl-alpha-D-muramoyl-L-alanine + ADP + phosphate + H(+). The protein operates within cell wall biogenesis; peptidoglycan biosynthesis. Cell wall formation. The polypeptide is UDP-N-acetylmuramate--L-alanine ligase (Clostridium tetani (strain Massachusetts / E88)).